The sequence spans 83 residues: Protein L83L (83 aa).

The tract at residues 1–26 is disordered; it reads MDTSLKKNNGALEADNKNYQNYKDEP.

This sequence belongs to the asfivirus L83L family. Interacts with host IL1B.

Its subcellular location is the host cytoplasm. Its function is as follows. May subvert the host innate immune response by interacting with host IL1B and interfering with its function. The polypeptide is Protein L83L (Ornithodoros (relapsing fever ticks)).